A 181-amino-acid chain; its full sequence is TATA-box-binding protein (181 aa).

A run of 2 repeats spans residues 7–83 (VVNV…VKEL) and 98–173 (VQNM…SKTL).

The protein belongs to the TBP family.

In terms of biological role, general factor that plays a role in the activation of archaeal genes transcribed by RNA polymerase. Binds specifically to the TATA box promoter element which lies close to the position of transcription initiation. The chain is TATA-box-binding protein from Methanococcus maripaludis (strain DSM 14266 / JCM 13030 / NBRC 101832 / S2 / LL).